Reading from the N-terminus, the 198-residue chain is Ribonuclease HII (198 aa).

In terms of domain architecture, RNase H type-2 spans 10–198 (QLVAGVDEVG…PVKRALGLAS (189 aa)). Residues Asp16, Glu17, and Asp108 each contribute to the a divalent metal cation site.

Belongs to the RNase HII family. The cofactor is Mn(2+). Requires Mg(2+) as cofactor.

The protein localises to the cytoplasm. The catalysed reaction is Endonucleolytic cleavage to 5'-phosphomonoester.. Its function is as follows. Endonuclease that specifically degrades the RNA of RNA-DNA hybrids. The polypeptide is Ribonuclease HII (Shigella boydii serotype 4 (strain Sb227)).